Consider the following 385-residue polypeptide: Nuclear hormone receptor family member nhr-68 (385 aa).

The segment at residues 4–79 (KEVCLVCQDF…VGMDKTSLQA (76 aa)) is a DNA-binding region (nuclear receptor). 2 consecutive NR C4-type zinc fingers follow at residues 7–27 (CLVCQDFSSGYHYGIPSCNGC) and 43–62 (CQFDQNCPVDKSIRCACRFC). Positions 81-110 (RDPIGYTKRNKKTLRHPMNELSGDESNSCT) are disordered. The NR LBD domain maps to 145 to 384 (PKRSLKQALC…SFAKELIFGD (240 aa)). The interval 373 to 384 (FTSFAKELIFGD) is AF-2.

This sequence belongs to the nuclear hormone receptor family.

Its subcellular location is the nucleus. In terms of biological role, probable transcription factor that acts in a feed-forward loop with nhr-10 to activate genes, including itself, involved in the vitamin B12-independent breakdown of the short-chain fatty acid propionate. This pathway is triggered in response to a diet low in vitamin B12, when canonical vitamin B12-dependent propionate breakdown cannot function; the resulting accumulation of propionate is probably sensed by nhr-68 and/or nhr-10. The polypeptide is Nuclear hormone receptor family member nhr-68 (Caenorhabditis elegans).